The primary structure comprises 760 residues: Phosphoribosylformylglycinamidine synthase subunit PurL (760 aa).

A disordered region spans residues 1–25 (MNMSLPADRDTAKKPSAQKPSAHAQ). His69 is a catalytic residue. Residues Tyr72 and Lys115 each contribute to the ATP site. Glu117 contacts Mg(2+). Substrate contacts are provided by residues 118-121 (SHNH) and Arg140. Residue His119 is the Proton acceptor of the active site. Asp141 is a Mg(2+) binding site. Position 265 (Gln265) interacts with substrate. Asp293 contacts Mg(2+). 337-339 (ESQ) serves as a coordination point for substrate. Positions 519 and 556 each coordinate ATP. Asn557 contributes to the Mg(2+) binding site. Ser559 contributes to the substrate binding site.

It belongs to the FGAMS family. Monomer. Part of the FGAM synthase complex composed of 1 PurL, 1 PurQ and 2 PurS subunits.

It localises to the cytoplasm. The catalysed reaction is N(2)-formyl-N(1)-(5-phospho-beta-D-ribosyl)glycinamide + L-glutamine + ATP + H2O = 2-formamido-N(1)-(5-O-phospho-beta-D-ribosyl)acetamidine + L-glutamate + ADP + phosphate + H(+). Its pathway is purine metabolism; IMP biosynthesis via de novo pathway; 5-amino-1-(5-phospho-D-ribosyl)imidazole from N(2)-formyl-N(1)-(5-phospho-D-ribosyl)glycinamide: step 1/2. Its function is as follows. Part of the phosphoribosylformylglycinamidine synthase complex involved in the purines biosynthetic pathway. Catalyzes the ATP-dependent conversion of formylglycinamide ribonucleotide (FGAR) and glutamine to yield formylglycinamidine ribonucleotide (FGAM) and glutamate. The FGAM synthase complex is composed of three subunits. PurQ produces an ammonia molecule by converting glutamine to glutamate. PurL transfers the ammonia molecule to FGAR to form FGAM in an ATP-dependent manner. PurS interacts with PurQ and PurL and is thought to assist in the transfer of the ammonia molecule from PurQ to PurL. This is Phosphoribosylformylglycinamidine synthase subunit PurL from Tropheryma whipplei (strain TW08/27) (Whipple's bacillus).